The chain runs to 499 residues: Probable UTP--glucose-1-phosphate uridylyltransferase (499 aa).

Residues 108–111 (LNGG), lysine 122, glutamine 185, and glycine 214 each bind UTP. 110–111 (GG) contributes to the substrate binding site. Residues histidine 215 and 243–245 (NID) contribute to the substrate site. UTP contacts are provided by aspartate 245 and lysine 387.

This sequence belongs to the UDPGP type 1 family.

The protein localises to the cytoplasm. Its subcellular location is the nucleus. The enzyme catalyses alpha-D-glucose 1-phosphate + UTP + H(+) = UDP-alpha-D-glucose + diphosphate. Its function is as follows. Plays a central role as a glucosyl donor in cellular metabolic pathways. The protein is Probable UTP--glucose-1-phosphate uridylyltransferase of Schizosaccharomyces pombe (strain 972 / ATCC 24843) (Fission yeast).